A 339-amino-acid chain; its full sequence is Fructose-1,6-bisphosphatase class 1 (339 aa).

Residues E91, D113, L115, and D116 each coordinate Mg(2+). Substrate is bound by residues 116–119, N210, and K276; that span reads DGSS. E282 contacts Mg(2+).

It belongs to the FBPase class 1 family. As to quaternary structure, homotetramer. It depends on Mg(2+) as a cofactor.

The protein localises to the cytoplasm. It catalyses the reaction beta-D-fructose 1,6-bisphosphate + H2O = beta-D-fructose 6-phosphate + phosphate. It participates in carbohydrate biosynthesis; gluconeogenesis. The protein is Fructose-1,6-bisphosphatase class 1 of Bordetella bronchiseptica (strain ATCC BAA-588 / NCTC 13252 / RB50) (Alcaligenes bronchisepticus).